The chain runs to 99 residues: Aspartyl/glutamyl-tRNA(Asn/Gln) amidotransferase subunit C (99 aa).

It belongs to the GatC family. Heterotrimer of A, B and C subunits.

The enzyme catalyses L-glutamyl-tRNA(Gln) + L-glutamine + ATP + H2O = L-glutaminyl-tRNA(Gln) + L-glutamate + ADP + phosphate + H(+). It catalyses the reaction L-aspartyl-tRNA(Asn) + L-glutamine + ATP + H2O = L-asparaginyl-tRNA(Asn) + L-glutamate + ADP + phosphate + 2 H(+). Allows the formation of correctly charged Asn-tRNA(Asn) or Gln-tRNA(Gln) through the transamidation of misacylated Asp-tRNA(Asn) or Glu-tRNA(Gln) in organisms which lack either or both of asparaginyl-tRNA or glutaminyl-tRNA synthetases. The reaction takes place in the presence of glutamine and ATP through an activated phospho-Asp-tRNA(Asn) or phospho-Glu-tRNA(Gln). This Solibacter usitatus (strain Ellin6076) protein is Aspartyl/glutamyl-tRNA(Asn/Gln) amidotransferase subunit C.